Consider the following 419-residue polypeptide: NF-kappa-B essential modulator (419 aa).

The tract at residues 1 to 48 (MSRPPWKSPLCEMVQPSGSPAGDQDMLGEESSLGKPAMLHVPSEQGTP) is disordered. The tract at residues 1–197 (MSRPPWKSPL…REALEQRHSV (197 aa)) is required for interaction with and ubiquitination by MARCHF2. Phosphoserine; by IKKB is present on residues serine 31 and serine 43. The tract at residues 44–111 (EQGTPETFQR…DLVVRLSLEK (68 aa)) is interaction with CHUK/IKBKB. The stretch at 49–353 (ETFQRCLEEN…KTSCQESARI (305 aa)) forms a coiled coil. Residue serine 68 is modified to Phosphoserine. Residues lysine 111, lysine 139, lysine 143, lysine 226, lysine 246, and lysine 264 each participate in a glycyl lysine isopeptide (Lys-Gly) (interchain with G-Cter in ubiquitin) cross-link. The segment at 150 to 257 (LGELQESQSR…SMVSSERNRG (108 aa)) is interaction with TANK. Positions 242-350 (DNHMKSSMVS…SRLKTSCQES (109 aa)) are ubiquitin-binding (UBAN). The tract at residues 246 to 365 (KSSMVSSERN…MRKRHVEVSQ (120 aa)) is self-association. Positions 251-419 (SSERNRGLQL…LQIHVMECIE (169 aa)) are required for interaction with TNFAIP3. Lysine 277 participates in a covalent cross-link: Glycyl lysine isopeptide (Lys-Gly) (interchain with G-Cter in SUMO); alternate. Residue lysine 277 forms a Glycyl lysine isopeptide (Lys-Gly) (interchain with G-Cter in ubiquitin); alternate linkage. Residues lysine 283, lysine 285, lysine 292, and lysine 302 each participate in a glycyl lysine isopeptide (Lys-Gly) (interchain with G-Cter in ubiquitin) cross-link. Lysine 309 is covalently cross-linked (Glycyl lysine isopeptide (Lys-Gly) (interchain with G-Cter in SUMO); alternate). Lysine 309 participates in a covalent cross-link: Glycyl lysine isopeptide (Lys-Gly) (interchain with G-Cter in ubiquitin); alternate. Residues lysine 321, lysine 325, and lysine 326 each participate in a glycyl lysine isopeptide (Lys-Gly) (interchain with G-Cter in ubiquitin) cross-link. The leucine-zipper stretch occupies residues 322-343 (LAEKKEFLQEQLEQLQREYSRL). The segment at 356–394 (MRKRHVEVSQPPLAPGPAHHSFHLNPSSQRRSPPDEPPK) is disordered. A Phosphoserine; by IKKB modification is found at serine 376. The interaction with CYLD stretch occupies residues 382–419 (SSQRRSPPDEPPKFCCPKCQYQAPDIDTLQIHVMECIE). Serine 387 bears the Phosphoserine mark. A CCHC NOA-type zinc finger spans residues 389-419 (PDEPPKFCCPKCQYQAPDIDTLQIHVMECIE). Cysteine 397 serves as a coordination point for Zn(2+). Lysine 399 participates in a covalent cross-link: Glycyl lysine isopeptide (Lys-Gly) (interchain with G-Cter in ubiquitin). Positions 400, 413, and 417 each coordinate Zn(2+).

Homodimer; disulfide-linked. Component of the I-kappa-B-kinase (IKK) core complex consisting of CHUK, IKBKB and IKBKG; probably four alpha/CHUK-beta/IKBKB dimers are associated with four gamma/IKBKG subunits. The IKK core complex seems to associate with regulatory or adapter proteins to form a IKK-signalosome holo-complex. The IKK complex associates with TERF2IP/RAP1, leading to promote IKK-mediated phosphorylation of RELA/p65. Part of a complex composed of NCOA2, NCOA3, CHUK/IKKA, IKBKB, IKBKG and CREBBP. Interacts with COPS3, CYLD, NALP2, TRPC4AP and PIDD1. Interacts with ATM; the complex is exported from the nucleus. Interacts with TRAF6. Interacts with IKBKE. Interacts with TANK; the interaction is enhanced by IKBKE and TBK1. Part of a ternary complex consisting of TANK, IKBKB and IKBKG. Interacts with ZFAND5. Interacts with RIPK2. Interacts with TNIP1 and TNFAIP3; TNIP1 facilitates the TNFAIP3-mediated de-ubiquitination of IKBKG. Interacts with TNFAIP3; the interaction is induced by TNF stimulation and by polyubiquitin. Binds (via UBAN region) polyubiquitin; binds both 'Lys-63'-linked and linear polyubiquitin, with higher affinity for linear ubiquitin. Interacts with NLRP10. Interacts with TANK; this interaction increases in response to DNA damage. Interacts with USP10; this interaction increases in response to DNA damage. Interacts with ZC3H12A; this interaction increases in response to DNA damage. Interacts with IFIT5; the interaction synergizes the recruitment of IKK to MAP3K7 and enhances IKK phosphorylation. Interacts with TRIM29; this interaction induces IKBKG/NEMO ubiquitination and proteolytic degradation. Interacts with TRIM13; this interaction leads to IKBKG/NEMO ubiquitination. Interacts with ARFIP2. Interacts with RIPK1. Interacts with (ubiquitinated) BCL10; interaction with polyubiquitinated BCL10 via both 'Lys-63'-linked and linear ubiquitin is required for TCR-induced NF-kappa-B activation. Interacts with MARCHF2; during the late stages of macrophage viral and bacterial infection; the interaction leads to ubiquitination and degradation of IKBKG/NEMO. Phosphorylation at Ser-68 attenuates aminoterminal homodimerization. In terms of processing, polyubiquitinated on Lys-285 through 'Lys-63'; the ubiquitination is mediated downstream of NOD2 and RIPK2 and probably plays a role in signaling by facilitating interactions with ubiquitin domain-containing proteins and activates the NF-kappa-B pathway. Polyubiquitinated on Lys-399 through 'Lys-63'; the ubiquitination is mediated by BCL10, MALT1 and TRAF6 and probably plays a role in signaling by facilitating interactions with ubiquitin domain-containing proteins and activates the NF-kappa-B pathway. Monoubiquitinated on Lys-277 and Lys-309; promotes nuclear export. Polyubiquitinated through 'Lys-27' by TRIM23; involved in antiviral innate and inflammatory responses. Linear polyubiquitinated on Lys-111, Lys-143, Lys-226, Lys-246, Lys-264, Lys-277, Lys-285, Lys-292, Lys-302, Lys-309 and Lys-326; the head-to-tail polyubiquitination is mediated by the LUBAC complex and plays a key role in NF-kappa-B activation. Deubiquitinated by USP10 in a TANK-dependent and -independent manner, leading to the negative regulation of NF-kappa-B signaling upon DNA damage. Ubiquitinated at Lys-326 by MARCHF2 following bacterial and viral infection which leads to its degradation. Polyubiquitinated via 'Lys-29'-linked ubiquitin; leading to lysosomal degradation. Post-translationally, sumoylated on Lys-277 and Lys-309 with SUMO1. Neddylated by TRIM40, resulting in stabilization of NFKBIA and down-regulation of NF-kappa-B activity.

Its subcellular location is the cytoplasm. It localises to the nucleus. Its function is as follows. Regulatory subunit of the IKK core complex which phosphorylates inhibitors of NF-kappa-B thus leading to the dissociation of the inhibitor/NF-kappa-B complex and ultimately the degradation of the inhibitor. Its binding to scaffolding polyubiquitin plays a key role in IKK activation by multiple signaling receptor pathways. Can recognize and bind both 'Lys-63'-linked and linear polyubiquitin upon cell stimulation, with a much highr affinity for linear polyubiquitin. Could be implicated in NF-kappa-B-mediated protection from cytokine toxicity. Essential for viral activation of IRF3. Involved in TLR3- and IFIH1-mediated antiviral innate response; this function requires 'Lys-27'-linked polyubiquitination. The polypeptide is NF-kappa-B essential modulator (IKBKG) (Bos taurus (Bovine)).